The following is a 525-amino-acid chain: MSKSNSMNSTSHETLFQQLVLGLDRMPLMDVHWLIYVAFGAWLCSYVIHVLSSSSTVKVPVVGYRSVFEPTWLLRLRFVWEGGSIIGQGYNKFKDSIFQVRKLGTDIVIIPPNYIDEVRKLSQDKTRSVEPFINDFAGQYTRGMVFLQSDLQNRVIQQRLTPKLVSLTKVMKEELDYALTKEMPDMKNDEWVEVDISSIMVRLISRISARVFLGPEHCRNQEWLTTTAEYSESLFITGFILRVVPHILRPFIAPLLPSYRTLLRNVSSGRRVIGDIIRSQQGDGNEDILSWMRDAATGEEKQIDNIAQRMLILSLASIHTTAMTMTHAMYDLCACPEYIEPLRDEVKSVVGASGWDKTALNRFHKLDSFLKESQRFNPVFLLTFNRIYHQSMTLSDGTNIPSGTRIAVPSHAMLQDSAHVPGPTPPTEFDGFRYSKIRSDSNYAQKYLFSMTDSSNMAFGYGKYACPGRFYASNEMKLTLAILLLQFEFKLPDGKGRPRNITIDSDMIPDPRARLCVRKRSLRDE.

Residues Val31–Leu51 form a helical membrane-spanning segment. Cys466 serves as a coordination point for heme.

It belongs to the cytochrome P450 family. The cofactor is heme.

Its subcellular location is the membrane. It catalyses the reaction ent-kaur-16-ene + 3 reduced [NADPH--hemoprotein reductase] + 3 O2 = ent-kaur-16-en-19-oate + 3 oxidized [NADPH--hemoprotein reductase] + 4 H2O + 4 H(+). Its pathway is plant hormone biosynthesis; gibberellin biosynthesis. Catalyzes three successive oxidations of the 4-methyl group of ent-kaurene giving kaurenoic acid, a key step in gibberellin (GA) biosynthesis. This is Ent-kaurene oxidase (CYP503A1) from Fusarium fujikuroi (Bakanae and foot rot disease fungus).